The sequence spans 495 residues: MAKNNAVAGFNALNGVELNLFTTDELKAIHYATMEVLMDPGIQVSDPEARQIFKENGCEVDEKTNVVKIPEYLVRKALQLAPSRFILWGRDKKFNTVQECGGKVHWTCFGTGVKMCKYQDGKYVTVDSVEKDIADIAKLCDWAENIDYFSLPVSARDIAGQGAQDVHETLTPIANTAKHFHHIDPVGENVEYYRDIVKAYYGGDEEEARKKPIFSMLLCPTSPLELSVNACQVIIKGARYGIPVNVLSMAMSGGSSPVYLAGTLVTHNAEVLSGIVLAQLTVPGAKVWYGSSTTTFDLKKGTAPVGSPELGLISAAVAKLAQFYGLPSYVAGSOSDAKVPDDQAGHEKTMTTLLPALSGANTIYGAGMLELGMTFSMEQLVIDNDIFSMVKKAMKGIPVSEETLAVESIQKVGIGNNFLALKQTRQLVDYPSNPMLLDRHMFGDWAAAGSKDLATVAHEKVEDVLKNHQVTPIDADILKDMQAIVDKADKAFRGM.

Position 334 (Pyl-334) is a non-standard amino acid, pyrrolysine.

Belongs to the trimethylamine methyltransferase family.

The catalysed reaction is Co(I)-[trimethylamine-specific corrinoid protein] + trimethylamine + H(+) = methyl-Co(III)-[trimethylamine-specific corrinoid protein] + dimethylamine. The protein operates within one-carbon metabolism; methanogenesis from trimethylamine. Functionally, catalyzes the transfer of a methyl group from trimethylamine to the corrinoid cofactor of MttC. In Methanosarcina barkeri (strain Fusaro / DSM 804), this protein is Trimethylamine methyltransferase MttB (mttB).